An 805-amino-acid polypeptide reads, in one-letter code: Transmembrane channel-like protein 6 (805 aa).

Residues 1 to 29 form a disordered region; that stretch reads MAQPLAFILDVPETPGDQGQGPSPYDESE. The Lumenal portion of the chain corresponds to 1–209; the sequence is MAQPLAFILD…SCCGRLRYAC (209 aa). Residue T89 is modified to Phosphothreonine. R94 is modified (omega-N-methylarginine). N103 is a glycosylation site (N-linked (GlcNAc...) asparagine). T105 is subject to Phosphothreonine. The helical transmembrane segment at 210-230 threads the bilayer; sequence VLALHSLGLALLSALQALMPW. Over 231 to 249 the chain is Cytoplasmic; that stretch reads RYALKRIGGQFGSSVLSYF. Residues 250–270 form a helical membrane-spanning segment; that stretch reads LFLKTLLAFNALLLLLLVAFI. Residues 271-338 are Lumenal-facing; sequence MGPQVAFPPA…TPRVGGLPYN (68 aa). N312 carries an N-linked (GlcNAc...) asparagine glycan. Residues 339-359 form a helical membrane-spanning segment; that stretch reads MPLAYLSTVGVSFFITCITLV. Over 360–431 the chain is Cytoplasmic; it reads YSMAHSFGES…RSVCGRLRQA (72 aa). The chain crosses the membrane as a helical span at residues 432–452; it reads AVLGLVWLLCLGTALGCAVAV. The Lumenal portion of the chain corresponds to 453-469; that stretch reads HVFSEFMIQSPEAAGQE. A helical transmembrane segment spans residues 470–490; that stretch reads AVLLVLPLVVGLLNLGAPYLC. Residues 491–505 lie on the Cytoplasmic side of the membrane; the sequence is RVLAALEPHDSPVLE. A helical transmembrane segment spans residues 506–526; that stretch reads VYVAICRNLILKLAILGTLCY. Over 527 to 553 the chain is Lumenal; that stretch reads HWLGRRVGVLQGQCWEDFVGQELYRFL. A helical transmembrane segment spans residues 554–574; that stretch reads VMDFVLMLLDTLFGELVWRII. Topologically, residues 575–604 are cytoplasmic; that stretch reads SEKKLKRRRKPEFDIARNVLELIYGQTLTW. A helical membrane pass occupies residues 605–625; that stretch reads LGVLFSPLLPAVQIIKLLLVF. Residues 626–650 lie on the Lumenal side of the membrane; the sequence is YVKKTSLLANCQAPRRPWLASHMST. A helical transmembrane segment spans residues 651 to 671; sequence VFLTLLCFPAFLGAAVFLCYA. Residues 672–722 are Cytoplasmic-facing; the sequence is VWQVKPSSTCGPFRTLDTMYEAGRVWVRHLEAAGPRVSWLPWVHRYLMENT. A helical membrane pass occupies residues 723 to 743; it reads FFVFLVSALLLAVIYLNIQVV. Residues 744–805 lie on the Lumenal side of the membrane; sequence RGQRKVICLL…PALLTDEQDA (62 aa). The segment at 778-805 is disordered; sequence KEREERSRVGTTEEAAAPPALLTDEQDA.

The protein belongs to the TMC family. Interacts with TMC8. Interacts and forms a complex with TMC8 and CIB1; the interaction stabilizes each component of the complex. Interacts and forms a complex with TMC8 and SLC30A1/ZNT1; the interaction regulates zinc transport into the ER. In terms of assembly, (Microbial infection) Interacts with human papillomavirus 16/HPV16 protein E5; the interaction alleviates TMC6-mediated transcription factors inhibition. Expressed in placenta, prostate, testis, activated T-lymphocytes and lymphokine-activated killer (LAK) lymphocytes.

The protein localises to the endoplasmic reticulum membrane. Its subcellular location is the golgi apparatus membrane. It localises to the nucleus membrane. Acts as a regulatory protein involved in the regulation of numerous cellular processes. Together with its homolog TMC8/EVER2, forms a complex with CIB1 in lymphocytes and keratynocytes where TMC6 and TMC8 stabilize CIB1 and reciprocally. Together with TMC8, also forms a complex with and activates zinc transporter ZNT1 at the ER membrane of keratynocytes, thereby facilitating zinc uptake into the ER. Down-regulates the activity of transcription factors induced by zinc and cytokines. Also plays a role in thermal sensation by inhibiting the M-channel (KCNQ2-KCNQ3 channel) current in primary sensory neurons. This chain is Transmembrane channel-like protein 6, found in Homo sapiens (Human).